A 285-amino-acid chain; its full sequence is NAD kinase (285 aa).

Residue Asp68 is the Proton acceptor of the active site. NAD(+) contacts are provided by residues 68–69, 142–143, Arg153, Lys170, Asp172, 183–188, and Gln242; these read DG, ND, and TAYNLS.

It belongs to the NAD kinase family. Requires a divalent metal cation as cofactor.

The protein resides in the cytoplasm. The enzyme catalyses NAD(+) + ATP = ADP + NADP(+) + H(+). Its function is as follows. Involved in the regulation of the intracellular balance of NAD and NADP, and is a key enzyme in the biosynthesis of NADP. Catalyzes specifically the phosphorylation on 2'-hydroxyl of the adenosine moiety of NAD to yield NADP. This is NAD kinase from Syntrophotalea carbinolica (strain DSM 2380 / NBRC 103641 / GraBd1) (Pelobacter carbinolicus).